The primary structure comprises 225 residues: UPF0173 metal-dependent hydrolase PYRAB05000 (225 aa).

Belongs to the UPF0173 family.

The polypeptide is UPF0173 metal-dependent hydrolase PYRAB05000 (Pyrococcus abyssi (strain GE5 / Orsay)).